Here is a 447-residue protein sequence, read N- to C-terminus: Adenylosuccinate synthetase (447 aa).

GTP is bound by residues 12 to 18 (GDEGKGK) and 40 to 42 (GHT). Residue Asp-13 is the Proton acceptor of the active site. 2 residues coordinate Mg(2+): Asp-13 and Gly-40. IMP-binding positions include 13 to 16 (DEGK), 38 to 41 (NAGH), Thr-128, Arg-142, Gln-223, Thr-238, and Arg-302. His-41 serves as the catalytic Proton donor. Substrate is bound at residue 298-304 (TTTGRRR). GTP-binding positions include Arg-304, 330-332 (KLD), and 412-414 (SLG).

It belongs to the adenylosuccinate synthetase family. In terms of assembly, homodimer. It depends on Mg(2+) as a cofactor.

It is found in the cytoplasm. The enzyme catalyses IMP + L-aspartate + GTP = N(6)-(1,2-dicarboxyethyl)-AMP + GDP + phosphate + 2 H(+). It functions in the pathway purine metabolism; AMP biosynthesis via de novo pathway; AMP from IMP: step 1/2. Functionally, plays an important role in the de novo pathway of purine nucleotide biosynthesis. Catalyzes the first committed step in the biosynthesis of AMP from IMP. The polypeptide is Adenylosuccinate synthetase (Thermosynechococcus vestitus (strain NIES-2133 / IAM M-273 / BP-1)).